The primary structure comprises 270 residues: Tryptophan synthase alpha chain (270 aa).

Catalysis depends on proton acceptor residues Glu49 and Asp60.

This sequence belongs to the TrpA family. As to quaternary structure, tetramer of two alpha and two beta chains.

It catalyses the reaction (1S,2R)-1-C-(indol-3-yl)glycerol 3-phosphate + L-serine = D-glyceraldehyde 3-phosphate + L-tryptophan + H2O. Its pathway is amino-acid biosynthesis; L-tryptophan biosynthesis; L-tryptophan from chorismate: step 5/5. The alpha subunit is responsible for the aldol cleavage of indoleglycerol phosphate to indole and glyceraldehyde 3-phosphate. The sequence is that of Tryptophan synthase alpha chain from Gluconobacter oxydans (strain 621H) (Gluconobacter suboxydans).